Consider the following 373-residue polypeptide: DNA replication and repair protein RecF (373 aa).

Gly30 to Thr37 lines the ATP pocket.

It belongs to the RecF family.

It localises to the cytoplasm. In terms of biological role, the RecF protein is involved in DNA metabolism; it is required for DNA replication and normal SOS inducibility. RecF binds preferentially to single-stranded, linear DNA. It also seems to bind ATP. This is DNA replication and repair protein RecF from Oenococcus oeni (strain ATCC BAA-331 / PSU-1).